A 97-amino-acid chain; its full sequence is YcgL domain-containing protein PputW619_3899 (97 aa).

The YcgL domain occupies 3-87 (RICSIYKSPR…AEDEYIEHLP (85 aa)).

In Pseudomonas putida (strain W619), this protein is YcgL domain-containing protein PputW619_3899.